We begin with the raw amino-acid sequence, 90 residues long: Progonadoliberin-1 (90 aa).

The signal sequence occupies residues 1–21; sequence MILKLMAGILLLTVCLEGCSS. Position 22 is a pyrrolidone carboxylic acid (glutamine 22). Position 31 is a glycine amide (glycine 31).

The protein belongs to the GnRH family. Post-translationally, the precursor is cleaved by ACE, which removes the Gly-Lys-Arg peptide at the C-terminus, leading to mature hormone. The mature form of Gonadoliberin-1 is also cleaved and degraded by ACE.

The protein localises to the secreted. Stimulates the secretion of gonadotropins; it stimulates the secretion of both luteinizing and follicle-stimulating hormones. The polypeptide is Progonadoliberin-1 (Gnrh1) (Mus musculus (Mouse)).